Consider the following 196-residue polypeptide: uncharacterized protein (196 aa).

The HTH cro/C1-type domain occupies 12 to 66; it reads LRAAREAQKMSQRELSARSGLTQSHISQIERGTMEPGLGSLVDVARALDLEIVLA. The H-T-H motif DNA-binding region spans 23–42; that stretch reads QRELSARSGLTQSHISQIER. A disordered region spans residues 174–196; that stretch reads VHRDRDDAVPRSAYALDEEDDNA.

This is an uncharacterized protein from Sinorhizobium fredii (strain NBRC 101917 / NGR234).